The chain runs to 893 residues: DNA mismatch repair protein MutS (893 aa).

637 to 644 (GPNMGGKS) provides a ligand contact to ATP.

The protein belongs to the DNA mismatch repair MutS family.

Functionally, this protein is involved in the repair of mismatches in DNA. It is possible that it carries out the mismatch recognition step. This protein has a weak ATPase activity. The chain is DNA mismatch repair protein MutS from Burkholderia thailandensis (strain ATCC 700388 / DSM 13276 / CCUG 48851 / CIP 106301 / E264).